The chain runs to 1806 residues: uncharacterized protein (1806 aa).

2 disordered regions span residues Glu-38–Phe-131 and Lys-158–Pro-282. The span at Lys-51–Pro-70 shows a compositional bias: low complexity. Phosphoserine is present on residues Ser-52, Ser-56, Ser-79, Ser-87, Ser-88, Ser-92, and Ser-128. A compositionally biased stretch (low complexity) spans Pro-82–Glu-100. Residues Asp-226–Pro-236 show a composition bias toward basic and acidic residues. 2 positions are modified to phosphoserine: Ser-244 and Ser-284. Disordered regions lie at residues Arg-299 to Arg-320, Lys-355 to Trp-431, Ser-456 to Asp-604, and Gln-627 to Pro-696. Phosphoserine is present on Ser-366. Thr-378 carries the phosphothreonine modification. Ser-384 carries the phosphoserine modification. Residues Trp-386–Ala-400 are compositionally biased toward basic and acidic residues. Ser-404 is subject to Phosphoserine. The segment covering Glu-412–Asp-422 has biased composition (basic and acidic residues). Over residues Ser-456–Pro-470 the composition is skewed to low complexity. Ser-458 and Ser-508 each carry phosphoserine. Positions Leu-514–Glu-523 are enriched in polar residues. Basic and acidic residues-rich tracts occupy residues Val-524–Ser-549 and Thr-564–Glu-573. Thr-600 carries the phosphothreonine modification. Composition is skewed to basic and acidic residues over residues Ala-641–Pro-652 and Asp-661–Arg-674. Phosphoserine is present on Ser-749. Disordered regions lie at residues Gln-860–Thr-901, Ser-969–Lys-989, and Gln-1000–Ser-1019. Residues Arg-889 to Arg-900 are compositionally biased toward polar residues. Phosphoserine occurs at positions 969 and 981. Basic and acidic residues predominate over residues Ser-969 to Asp-978. Thr-1059 carries the post-translational modification Phosphothreonine. Residues Ser-1063 and Ser-1154 each carry the phosphoserine modification. Residues Arg-1134–Lys-1178 are disordered. Residues Pro-1142–Leu-1166 show a composition bias toward polar residues. At Thr-1163 the chain carries Phosphothreonine. Positions Arg-1169–Lys-1178 are enriched in basic and acidic residues. Residues Thr-1179 and Thr-1185 each carry the phosphothreonine modification. Disordered stretches follow at residues Pro-1216 to Ser-1265 and Lys-1291 to Val-1493. The residue at position 1224 (Ser-1224) is a Phosphoserine. Position 1226 is a phosphothreonine (Thr-1226). Composition is skewed to basic and acidic residues over residues Glu-1244–Pro-1254 and Asp-1317–Ala-1331. Ser-1366 is subject to Phosphoserine. Basic and acidic residues-rich tracts occupy residues Asp-1393–Ser-1410 and His-1426–Lys-1437. Ser-1441 is modified (phosphoserine). The span at Asp-1462 to Pro-1483 shows a compositional bias: basic and acidic residues. 2 positions are modified to phosphoserine: Ser-1488 and Ser-1506. Disordered stretches follow at residues Gln-1512 to Asp-1627 and Ala-1642 to Val-1806. The span at Thr-1522–Val-1531 shows a compositional bias: basic and acidic residues. Polar residues predominate over residues Gln-1537 to Pro-1568. Ser-1555 and Ser-1662 each carry phosphoserine. Residues Leu-1649–Ser-1666 show a composition bias toward basic residues. Basic and acidic residues-rich tracts occupy residues Arg-1667–Leu-1677 and Asp-1689–Pro-1714. A phosphoserine mark is found at Ser-1701, Ser-1757, Ser-1760, and Ser-1786. A compositionally biased stretch (low complexity) spans Pro-1753–Pro-1764.

This is an uncharacterized protein from Homo sapiens (Human).